The following is a 147-amino-acid chain: Ribonuclease 4 (147 aa).

The signal sequence occupies residues 1 to 28; that stretch reads MALQRTHSLLLLLLLTLLGLGLVQPSYG. Pyrrolidone carboxylic acid is present on Q29. Residues R35, H40, K68, N71, and T72 each contribute to the dUMP site. H40 serves as the catalytic Proton acceptor. 4 disulfide bridges follow: C53–C109, C67–C120, C85–C135, and C92–C99. H144 functions as the Proton donor in the catalytic mechanism. Residue F145 coordinates dUMP.

It belongs to the pancreatic ribonuclease family.

It localises to the secreted. Cleaves preferentially after uridine bases. Has antimicrobial activity against uropathogenic E.coli (UPEC). Probably contributes to urinary tract sterility. The sequence is that of Ribonuclease 4 (RNASE4) from Pongo abelii (Sumatran orangutan).